The following is a 401-amino-acid chain: Nicotinate phosphoribosyltransferase (401 aa).

The residue at position 224 (His224) is a Phosphohistidine; by autocatalysis.

It belongs to the NAPRTase family. Transiently phosphorylated on a His residue during the reaction cycle. Phosphorylation strongly increases the affinity for substrates and increases the rate of nicotinate D-ribonucleotide production. Dephosphorylation regenerates the low-affinity form of the enzyme, leading to product release.

It catalyses the reaction nicotinate + 5-phospho-alpha-D-ribose 1-diphosphate + ATP + H2O = nicotinate beta-D-ribonucleotide + ADP + phosphate + diphosphate. It functions in the pathway cofactor biosynthesis; NAD(+) biosynthesis; nicotinate D-ribonucleotide from nicotinate: step 1/1. Its function is as follows. Catalyzes the synthesis of beta-nicotinate D-ribonucleotide from nicotinate and 5-phospho-D-ribose 1-phosphate at the expense of ATP. This Pseudomonas putida (strain ATCC 47054 / DSM 6125 / CFBP 8728 / NCIMB 11950 / KT2440) protein is Nicotinate phosphoribosyltransferase.